Reading from the N-terminus, the 311-residue chain is Aquaporin NIP3-1 (311 aa).

The interval 1 to 34 (MEMAAPNGGGAAGMSSPVNGASAPATPGTPAPLF) is disordered. Residues 20-34 (GASAPATPGTPAPLF) are compositionally biased toward low complexity. 2 consecutive transmembrane segments (helical) span residues 85 to 105 (LGAEFVGTFILIFFATAAPIV) and 111 to 131 (GAISPFGNAACAGLAVTTIIL). Positions 142 to 144 (NPS) match the NPA 1 motif. Transmembrane regions (helical) follow at residues 158-178 (LQVPAYVAVQVLGSICAGFAL), 202-222 (AFFTEFIITFNLLFVVTAVAT), and 226-246 (AVGELAGIAVGAAVTLNILIA). The short motif at 255–257 (NPV) is the NPA 2 element. A helical transmembrane segment spans residues 273 to 293 (WIYLIAPTLGAVAGAGVYTAV).

The protein belongs to the MIP/aquaporin (TC 1.A.8) family. NIP (TC 1.A.8.12) subfamily. In terms of tissue distribution, expressed in roots and leaves.

It localises to the membrane. Its function is as follows. Aquaporins facilitate the transport of water and small neutral solutes across cell membranes. The sequence is that of Aquaporin NIP3-1 (NIP3-1) from Oryza sativa subsp. japonica (Rice).